Here is a 250-residue protein sequence, read N- to C-terminus: S-adenosyl-L-methionine-dependent 2-deoxy-scyllo-inosamine dehydrogenase (250 aa).

[4Fe-4S] cluster-binding residues include C16, C20, C23, C169, C187, and E223.

This sequence belongs to the radical SAM superfamily. It depends on [4Fe-4S] cluster as a cofactor.

The catalysed reaction is 2-deoxy-scyllo-inosamine + S-adenosyl-L-methionine = 3-amino-2,3-dideoxy-scyllo-inosose + 5'-deoxyadenosine + L-methionine + H(+). Its pathway is antibiotic biosynthesis; butirosin biosynthesis. Its function is as follows. Catalyzes the radical S-adenosyl-L-methionine (SAM)-dependent two-electron oxidation of 2-deoxy-scyllo-inosamine (DOIA) to amino-dideoxy-scyllo-inosose (amino-DOI) in the biosynthetic pathway of butirosin. In Niallia circulans (Bacillus circulans), this protein is S-adenosyl-L-methionine-dependent 2-deoxy-scyllo-inosamine dehydrogenase (btrN).